The sequence spans 154 residues: 2S sulfur-rich seed storage protein 2 (154 aa).

Positions 1-22 (MAKMSVVAAALLALLVLGQATA) are cleaved as a signal peptide. The disordered stretch occupies residues 29–52 (TTLEEEQEENPRGRSEQQCREQME). A compositionally biased stretch (basic and acidic residues) spans 37–52 (ENPRGRSEQQCREQME). 4 cysteine pairs are disulfide-bonded: Cys-47–Cys-101, Cys-60–Cys-90, Cys-91–Cys-138, and Cys-103–Cys-145. Residues 72–76 (PYQNP) constitute a propeptide that is removed on maturation. The propeptide occupies 151 to 154 (TAWL).

Belongs to the 2S seed storage albumins family. In terms of assembly, the mature protein consists of a small and a large chain linked by disulfide bonds.

This is a 2S seed storage protein. In Bertholletia excelsa (Brazil nut), this protein is 2S sulfur-rich seed storage protein 2 (BE2S2).